Consider the following 897-residue polypeptide: 3'-5' exonuclease DinG (897 aa).

The region spanning 8-161 (VVDLETTGNQ…DEDAATTAKL (154 aa)) is the Exonuclease domain. Residues 241-496 (SKAVDQLGLT…KAIDQLEKQR (256 aa)) enclose the Helicase ATP-binding domain. 276–283 (ASLGSGKS) provides a ligand contact to ATP. The short motif at 448–451 (DEAH) is the DEAH box element. The Helicase C-terminal domain maps to 703-883 (NIDEYVASIV…NYRQKKGDIQ (181 aa)).

Belongs to the helicase family. DinG subfamily. Type 2 sub-subfamily.

Functionally, 3'-5' exonuclease. In Staphylococcus aureus (strain bovine RF122 / ET3-1), this protein is 3'-5' exonuclease DinG.